A 474-amino-acid polypeptide reads, in one-letter code: Lipoprotein lipase (474 aa).

The first 27 residues, 1–27, serve as a signal peptide directing secretion; that stretch reads MESKALLLVALGVWLQSLTAFRGGVAA. Residues 32–53 form an interaction with GPIHBP1 region; that stretch reads RDFSDIESKFALRTPEDTAEDT. A disulfide bond links Cys-54 and Cys-67. N-linked (GlcNAc...) asparagine glycosylation occurs at Asn-70. Position 121 is a 3'-nitrotyrosine (Tyr-121). Residue Ser-159 is the Nucleophile of the active site. Asp-183 serves as the catalytic Charge relay system. At Tyr-191 the chain carries 3'-nitrotyrosine. The Ca(2+) site is built by Ala-194, Arg-197, Ser-199, and Asp-202. A disulfide bridge links Cys-243 with Cys-266. Positions 243-266 are essential for determining substrate specificity; sequence CNIGEAIRVIAEKGLGDVDQLVKC. His-268 functions as the Charge relay system in the catalytic mechanism. Disulfide bonds link Cys-291–Cys-310 and Cys-302–Cys-305. One can recognise a PLAT domain in the interval 341–464; sequence FHYQVKIHFS…KGKDAAVFVK (124 aa). Residue Tyr-343 is modified to 3'-nitrotyrosine. An N-linked (GlcNAc...) asparagine glycan is attached at Asn-386. Residues 417–421 form an important for interaction with lipoprotein particles region; sequence WSDWW. The tract at residues 430–434 is important for heparin binding; it reads KIRVK. The segment at 443-467 is interaction with GPIHBP1; the sequence is IFCAREKVSHLQKGKDAAVFVKCHD. A disulfide bridge connects residues Cys-445 and Cys-465.

The protein belongs to the AB hydrolase superfamily. Lipase family. Homodimer. Interacts with GPIHBP1 with 1:1 stoichiometry. Interacts with APOC2; the interaction activates LPL activity in the presence of lipids. Interaction with heparan sulfate proteoglycans is required to protect LPL against loss of activity. Associates with lipoprotein particles in blood plasma. Interacts with LMF1 and SEL1L; interaction with SEL1L is required to prevent aggregation of newly synthesized LPL in the endoplasmic reticulum (ER), and for normal export of LPL from the ER to the extracellular space. Interacts with SORL1; SORL1 acts as a sorting receptor, promoting LPL localization to endosomes and later to lysosomes, leading to degradation of newly synthesized LPL. In terms of processing, tyrosine nitration after lipopolysaccharide (LPS) challenge down-regulates the lipase activity.

The protein localises to the cell membrane. The protein resides in the secreted. It localises to the extracellular space. Its subcellular location is the extracellular matrix. It catalyses the reaction a triacylglycerol + H2O = a diacylglycerol + a fatty acid + H(+). The enzyme catalyses a 1,2-diacyl-sn-glycero-3-phosphocholine + H2O = a 2-acyl-sn-glycero-3-phosphocholine + a fatty acid + H(+). The catalysed reaction is 1,2,3-tri-(9Z-octadecenoyl)-glycerol + H2O = di-(9Z)-octadecenoylglycerol + (9Z)-octadecenoate + H(+). It carries out the reaction 1,2-di-(9Z-octadecenoyl)-sn-glycero-3-phosphocholine + H2O = (9Z-octadecenoyl)-sn-glycero-3-phosphocholine + (9Z)-octadecenoate + H(+). It catalyses the reaction 1,2,3-tributanoylglycerol + H2O = dibutanoylglycerol + butanoate + H(+). The enzyme catalyses 1,2-dihexadecanoyl-sn-glycero-3-phosphocholine + H2O = hexadecanoyl-sn-glycero-3-phosphocholine + hexadecanoate + H(+). With respect to regulation, the apolipoprotein APOC2 acts as a coactivator of LPL activity. Ca(2+) binding promotes protein stability and formation of the active homodimer. Interaction with GPIHBP1 protects LPL against inactivation by ANGPTL4. Its function is as follows. Key enzyme in triglyceride metabolism. Catalyzes the hydrolysis of triglycerides from circulating chylomicrons and very low density lipoproteins (VLDL), and thereby plays an important role in lipid clearance from the blood stream, lipid utilization and storage. Although it has both phospholipase and triglyceride lipase activities it is primarily a triglyceride lipase with low but detectable phospholipase activity. Mediates margination of triglyceride-rich lipoprotein particles in capillaries. Recruited to its site of action on the luminal surface of vascular endothelium by binding to GPIHBP1 and cell surface heparan sulfate proteoglycans. This chain is Lipoprotein lipase (Lpl), found in Rattus norvegicus (Rat).